Consider the following 122-residue polypeptide: Large ribosomal subunit protein uL14 (122 aa).

It belongs to the universal ribosomal protein uL14 family. Part of the 50S ribosomal subunit. Forms a cluster with proteins L3 and L19. In the 70S ribosome, L14 and L19 interact and together make contacts with the 16S rRNA in bridges B5 and B8.

Its function is as follows. Binds to 23S rRNA. Forms part of two intersubunit bridges in the 70S ribosome. This Chloroflexus aurantiacus (strain ATCC 29366 / DSM 635 / J-10-fl) protein is Large ribosomal subunit protein uL14.